Consider the following 134-residue polypeptide: Small ribosomal subunit protein uS8c (134 aa).

The protein belongs to the universal ribosomal protein uS8 family. In terms of assembly, part of the 30S ribosomal subunit.

The protein resides in the plastid. One of the primary rRNA binding proteins, it binds directly to 16S rRNA central domain where it helps coordinate assembly of the platform of the 30S subunit. This chain is Small ribosomal subunit protein uS8c (rps8), found in Epifagus virginiana (Beechdrops).